Reading from the N-terminus, the 87-residue chain is MEEILRNARKERTGKVVSNKMNKSITVAVERKVKHAKYGKFIHKTTKLMAHDENQECGIGDTVRVMETRPLSKLKRWRLVEVIEKAK.

Belongs to the universal ribosomal protein uS17 family. Part of the 30S ribosomal subunit.

Its function is as follows. One of the primary rRNA binding proteins, it binds specifically to the 5'-end of 16S ribosomal RNA. This chain is Small ribosomal subunit protein uS17, found in Cytophaga hutchinsonii (strain ATCC 33406 / DSM 1761 / CIP 103989 / NBRC 15051 / NCIMB 9469 / D465).